The primary structure comprises 237 residues: Ribosomal RNA large subunit methyltransferase E (237 aa).

S-adenosyl-L-methionine contacts are provided by Gly-76, Trp-78, Asp-99, Asp-115, and Asp-139. The active-site Proton acceptor is Lys-179.

It belongs to the class I-like SAM-binding methyltransferase superfamily. RNA methyltransferase RlmE family.

The protein resides in the cytoplasm. The enzyme catalyses uridine(2552) in 23S rRNA + S-adenosyl-L-methionine = 2'-O-methyluridine(2552) in 23S rRNA + S-adenosyl-L-homocysteine + H(+). Its function is as follows. Specifically methylates the uridine in position 2552 of 23S rRNA at the 2'-O position of the ribose in the fully assembled 50S ribosomal subunit. This is Ribosomal RNA large subunit methyltransferase E from Rhodopseudomonas palustris (strain ATCC BAA-98 / CGA009).